Consider the following 289-residue polypeptide: Glycine--tRNA ligase alpha subunit (289 aa).

The protein belongs to the class-II aminoacyl-tRNA synthetase family. In terms of assembly, tetramer of two alpha and two beta subunits.

The protein localises to the cytoplasm. It catalyses the reaction tRNA(Gly) + glycine + ATP = glycyl-tRNA(Gly) + AMP + diphosphate. The sequence is that of Glycine--tRNA ligase alpha subunit from Rickettsia typhi (strain ATCC VR-144 / Wilmington).